The following is a 117-amino-acid chain: Non-specific lipid-transfer protein 2 (117 aa).

The N-terminal stretch at 1-25 is a signal peptide; that stretch reads MAGLMKLACLVLACMIVAGPITSNA. 4 cysteine pairs are disulfide-bonded: cysteine 29-cysteine 76, cysteine 39-cysteine 53, cysteine 54-cysteine 99, and cysteine 74-cysteine 113.

It belongs to the plant LTP family.

Plant non-specific lipid-transfer proteins transfer phospholipids as well as galactolipids across membranes. May play a role in wax or cutin deposition in the cell walls of expanding epidermal cells and certain secretory tissues. The protein is Non-specific lipid-transfer protein 2 (LTP2) of Brassica napus (Rape).